The primary structure comprises 97 residues: Large ribosomal subunit protein uL23 (97 aa).

It belongs to the universal ribosomal protein uL23 family. Part of the 50S ribosomal subunit. Contacts protein L29, and trigger factor when it is bound to the ribosome.

One of the early assembly proteins it binds 23S rRNA. One of the proteins that surrounds the polypeptide exit tunnel on the outside of the ribosome. Forms the main docking site for trigger factor binding to the ribosome. This chain is Large ribosomal subunit protein uL23, found in Rhizobium etli (strain CIAT 652).